The chain runs to 249 residues: NADH-quinone oxidoreductase subunit C (249 aa).

It belongs to the complex I 30 kDa subunit family. As to quaternary structure, NDH-1 is composed of 14 different subunits. Subunits NuoB, C, D, E, F, and G constitute the peripheral sector of the complex.

The protein localises to the cell inner membrane. The enzyme catalyses a quinone + NADH + 5 H(+)(in) = a quinol + NAD(+) + 4 H(+)(out). In terms of biological role, NDH-1 shuttles electrons from NADH, via FMN and iron-sulfur (Fe-S) centers, to quinones in the respiratory chain. The immediate electron acceptor for the enzyme in this species is believed to be ubiquinone. Couples the redox reaction to proton translocation (for every two electrons transferred, four hydrogen ions are translocated across the cytoplasmic membrane), and thus conserves the redox energy in a proton gradient. This chain is NADH-quinone oxidoreductase subunit C, found in Stenotrophomonas maltophilia (strain R551-3).